We begin with the raw amino-acid sequence, 95 residues long: FXYD domain-containing ion transport regulator 6 (95 aa).

An N-terminal signal peptide occupies residues 1–18 (MEVVLLFLCGLLAPAVLA). At 19 to 35 (SATEQEKEKDPFHYDYQ) the chain is on the extracellular side. The chain crosses the membrane as a helical span at residues 36–58 (TLRIGGLVFAVVLFSVGILLILS). Residues 59-95 (RRCKCSFNQKPRAPGDEEAQVENLVTANATEPQKAEN) lie on the Cytoplasmic side of the membrane. Residues 69–95 (PRAPGDEEAQVENLVTANATEPQKAEN) are disordered.

The protein belongs to the FXYD family. In terms of assembly, regulatory subunit of the sodium/potassium-transporting ATPase which is composed of a catalytic alpha subunit, a non-catalytic beta subunit and an additional regulatory subunit. The regulatory subunit, a member of the FXYD protein family, modulates the enzymatic activity in a tissue- and isoform-specific way by changing affinities of the Na+/K+-ATPase toward Na(+), K(+) or ATP.

It localises to the cell membrane. Functionally, associates with and regulates the activity of the sodium/potassium-transporting ATPase (NKA) which catalyzes the hydrolysis of ATP coupled with the exchange of Na(+) and K(+) ions across the plasma membrane. Reduces the apparent affinity for intracellular Na(+) with no change in the apparent affinity for extracellular K(+). In addition to modulating NKA kinetics, may also function as a regulator of NKA localization to the plasma membrane. This Bos taurus (Bovine) protein is FXYD domain-containing ion transport regulator 6 (FXYD6).